The chain runs to 277 residues: Small ribosomal subunit protein mS23 (277 aa).

Disordered stretches follow at residues 48 to 85 (APSH…KKPS) and 232 to 277 (LAAF…GPPI). Over residues 244–269 (ESGESEDEIPLIEEEDAIGASEESET) the composition is skewed to acidic residues.

Belongs to the mitochondrion-specific ribosomal protein mS23 family. As to quaternary structure, component of the mitochondrial small ribosomal subunit.

It is found in the mitochondrion. The sequence is that of Small ribosomal subunit protein mS23 (RSM25) from Ajellomyces capsulatus (strain NAm1 / WU24) (Darling's disease fungus).